The chain runs to 38 residues: Photosystem II reaction center protein L (38 aa).

Residues 17–37 traverse the membrane as a helical segment; the sequence is SLYWGLLLIFVLAVLFSNYFF.

This sequence belongs to the PsbL family. In terms of assembly, PSII is composed of 1 copy each of membrane proteins PsbA, PsbB, PsbC, PsbD, PsbE, PsbF, PsbH, PsbI, PsbJ, PsbK, PsbL, PsbM, PsbT, PsbX, PsbY, PsbZ, Psb30/Ycf12, at least 3 peripheral proteins of the oxygen-evolving complex and a large number of cofactors. It forms dimeric complexes.

The protein resides in the plastid. The protein localises to the chloroplast thylakoid membrane. In terms of biological role, one of the components of the core complex of photosystem II (PSII). PSII is a light-driven water:plastoquinone oxidoreductase that uses light energy to abstract electrons from H(2)O, generating O(2) and a proton gradient subsequently used for ATP formation. It consists of a core antenna complex that captures photons, and an electron transfer chain that converts photonic excitation into a charge separation. This subunit is found at the monomer-monomer interface and is required for correct PSII assembly and/or dimerization. The sequence is that of Photosystem II reaction center protein L from Psilotum nudum (Whisk fern).